The sequence spans 452 residues: Phosphoglucosamine mutase (452 aa).

The active-site Phosphoserine intermediate is the Ser109. The Mg(2+) site is built by Ser109, Asp248, Asp250, and Asp252. Ser109 is subject to Phosphoserine.

Belongs to the phosphohexose mutase family. Mg(2+) serves as cofactor. In terms of processing, activated by phosphorylation.

The catalysed reaction is alpha-D-glucosamine 1-phosphate = D-glucosamine 6-phosphate. Catalyzes the conversion of glucosamine-6-phosphate to glucosamine-1-phosphate. This Erythrobacter litoralis (strain HTCC2594) protein is Phosphoglucosamine mutase.